We begin with the raw amino-acid sequence, 392 residues long: Alanine--glyoxylate aminotransferase (392 aa).

Lys209 is subject to N6-(pyridoxal phosphate)lysine. At Lys225 the chain carries N6-acetyllysine; alternate. N6-succinyllysine; alternate is present on Lys225. 2 positions are modified to N6-acetyllysine: Lys234 and Lys312. Arg360 is a substrate binding site. Residues Lys390–Leu392 carry the Microbody targeting signal motif.

This sequence belongs to the class-V pyridoxal-phosphate-dependent aminotransferase family. In terms of assembly, homodimer. Requires pyridoxal 5'-phosphate as cofactor.

Its subcellular location is the peroxisome. It catalyses the reaction L-serine + pyruvate = 3-hydroxypyruvate + L-alanine. The enzyme catalyses glyoxylate + L-alanine = glycine + pyruvate. In terms of biological role, peroxisomal aminotransferase that catalyzes the transamination of glyoxylate to glycine and contributes to the glyoxylate detoxification. Also catalyzes the transamination between L-serine and pyruvate and contributes to gluconeogenesis from the L-serine metabolism. This Pongo abelii (Sumatran orangutan) protein is Alanine--glyoxylate aminotransferase.